The following is a 344-amino-acid chain: Centromere protein L (344 aa).

The tract at residues 1-32 (MAGGRPAGSAIEMEGAMRTLPSSGRPSGTGWQ) is disordered. Over residues 20 to 32 (LPSSGRPSGTGWQ) the composition is skewed to polar residues.

Belongs to the CENP-L/IML3 family. As to quaternary structure, component of the CENPA-HI complex, at least composed of CENPH, CENPI, CENPK, CENPL, CENPM, CENPO and CENPP.

The protein resides in the nucleus. It localises to the chromosome. Its subcellular location is the centromere. Its function is as follows. Component of the CENPA-HI complex, a centromeric complex involved in assembly of kinetochore proteins, mitotic progression and chromosome segregation. This chain is Centromere protein L (CENPL), found in Gallus gallus (Chicken).